The sequence spans 510 residues: 2,3-bisphosphoglycerate-independent phosphoglycerate mutase (510 aa).

Mn(2+) contacts are provided by D13 and S63. Catalysis depends on S63, which acts as the Phosphoserine intermediate. Residues H124, 154–155 (RD), R186, R192, 262–265 (RADR), and K334 each bind substrate. Mn(2+) is bound by residues D401, H405, D442, H443, and H461.

It belongs to the BPG-independent phosphoglycerate mutase family. In terms of assembly, monomer. The cofactor is Mn(2+).

The enzyme catalyses (2R)-2-phosphoglycerate = (2R)-3-phosphoglycerate. Its pathway is carbohydrate degradation; glycolysis; pyruvate from D-glyceraldehyde 3-phosphate: step 3/5. Its function is as follows. Catalyzes the interconversion of 2-phosphoglycerate and 3-phosphoglycerate. This is 2,3-bisphosphoglycerate-independent phosphoglycerate mutase from Vibrio parahaemolyticus serotype O3:K6 (strain RIMD 2210633).